The primary structure comprises 859 residues: Leucine--tRNA ligase (859 aa).

Positions 43–53 (PYPSGRIHMGH) match the 'HIGH' region motif. The short motif at 614–618 (KMSKS) is the 'KMSKS' region element. Lys-617 contacts ATP.

It belongs to the class-I aminoacyl-tRNA synthetase family.

Its subcellular location is the cytoplasm. The enzyme catalyses tRNA(Leu) + L-leucine + ATP = L-leucyl-tRNA(Leu) + AMP + diphosphate. The sequence is that of Leucine--tRNA ligase from Magnetococcus marinus (strain ATCC BAA-1437 / JCM 17883 / MC-1).